A 596-amino-acid chain; its full sequence is MASTFTATSSLGSLLAPNAIKLSSATSISSSSFGRRHNVCVRRSRPAIVCAAKELHFNKDGTTIRKLQTGVNKLADLVGVTLGPKGRNVVLESKYGSPRIVNDGVTVAREVELEDPVENIGAKLVRQAAAKTNDLAGDGTTTSVVLAQGFIAEGVKVVAAGANPVLITRGIEKTAKALVNELKLMSKEVEDSELADVAAVSAGNNHEVGSMIAEAMSKVGRKGVVTLEEGKSAENNLYVVEGMQFDRGYISPYFVTDSEKMSVEYDNCKLLLVDKKVTNARDLVGVLEDAIRGGYPILIIAEDIEQEALATLVVNKLRGTLKIAALKAPGFGERKSQYLDDIAILTGATVIREEVGLSLDKAGKEVLGNASKVVLTKEMTTIVGDGTTQEAVNKRVVQIRNLIEQAEQDYEKEKLNERIAKLSGGVAVIQVGAQTETELKEKKLRVEDALNATKAAVEEGIVVGGGCTLLRLASKVDAIKDTLENDEEKVGAEIVKRALSYPLKLIAKNAGVNGSVVSEKVLANDNVKFGYNAATGKYEDLMAAGIIDPTKVVRCCLEHAASVAKTFLMSDCVVVEIPEPEPVPAGNPMDNSGYGY.

A chloroplast-targeting transit peptide spans 1 to 50 (MASTFTATSSLGSLLAPNAIKLSSATSISSSSFGRRHNVCVRRSRPAIVC). A phosphoserine mark is found at S97 and S474. Residues 388–489 (TQEAVNKRVV…KDTLENDEEK (102 aa)) adopt a coiled-coil conformation.

Belongs to the chaperonin (HSP60) family. As to quaternary structure, part of the Cpn60 complex composed of 7 alpha and 7 beta subunits. Can also form a complex composed of 14 beta subunits only. Both complexes show ATPase activity. The Cpn60 complex interacts with the Cpn10 complex. Interacts with RAB during heat stress.

It localises to the plastid. The protein localises to the chloroplast stroma. Involved in protein assisted folding. This chain is Chaperonin 60 subunit beta 2, chloroplastic (CPN60B2), found in Arabidopsis thaliana (Mouse-ear cress).